A 262-amino-acid chain; its full sequence is MSTTSVIPKHWVDKGPWPIMTTPQGEGQDTNSHYSVFLATDMCHVHNLFIRAMNSVYLQCPYVTDQADIADLLFYTKTLVITIDAHHDSEEKYLFPELAAYTKNPKIMAVNQAQHAAFHGGLEKLGEYCTTTSPADYSSVTFRAMIDSFAPQLFKHLNDEIPTILALKQYPSEDLKTIWTKTEQHIDDVGSFDEMFPLAFGCMDKGFEAGQHKFPPAPFFMEYVVRYWFARKHSGAWRFNPCDMRGNPRQLLFIPTEEDQKP.

A hemerythrin-like region spans residues 69–160 (IADLLFYTKT…PQLFKHLNDE (92 aa)).

The protein operates within secondary metabolite biosynthesis. Its function is as follows. Part of the gene cluster that mediates the biosynthesis of the dimeric xanthones cryptosporioptides. The pathway begins with the synthesis of atrochrysone thioester by the polyketide synthase dmx-nrPKS. The atrochrysone carboxyl ACP thioesterase dmxR1 then breaks the thioester bond and releases the atrochrysone carboxylic acid from dmx-nrPKS. Atrochrysone carboxylic acid is decarboxylated by the decarboxylase dmxR15, and oxidized by the anthrone oxygenase dmxR16 to yield emodin. Emodin is then reduced to emodin hydroquinone by the oxidoreductase dmxR7. A-ring reduction by the short chain dehydrogenase dmxR18, dehydration by the scytalone dehydratase-like protein dmxR17 and probable spontaneous re-oxidation, results in overall deoxygenation to chrysophanol. Baeyer-Villiger oxidation by the Baeyer-Villiger monooxygenase (BVMO) dmxR6 then yields monodictylactone in equilibrium with monodictyphenone. In the case of the cryptosporioptides biosynthesis, monodictylactone is reduced at C-12 to an alcohol (by the short chain dehydrogenases dmxR12 or dmxR8) and hydroxylated at C-5 by dmxR9, yielding the electron-rich aromatic which could eliminate H(2)O to form the ortho-quinonemethide, followed by tautomerisation to paraquinone and complete the formal reduction to produce the 10-methylgroup. Conjugate addition of C-4a-OH to the resulting paraquinone by the monooxygenase dmxR10 then gives cyclohexadienone, which is then reduced at C-5 by the short chain dehydrogenase dmxR3 to give the dihydroxanthone. The 6,7-epoxide in the cryptosporioptides could be introduced by the cytochrome P450 monooxygenase dmxL3. The highly reducing PKS dmxL2 manufactures butyrate, which is further carboxylated by dmxL1 to form ethylmalonate. It is not yet clear whether the carboxylation occurs while the butyrate is attached to the ACP of dmxL2, but this unusual fungal metabolite could then be esterified to O-5 by the O-acetyltransferase dmxR13. Finally, dimerization performed by dmxR5 gives the observed dimers cryptosporioptides A, B and C as the final products of the pathway. The chain is Dimeric xanthone biosynthesis cluster protein R11 from Cryptosporiopsis sp. (strain 8999).